The chain runs to 511 residues: Cytochrome P450 monooxygenase roqR (511 aa).

The first 23 residues, 1–23 (MSGYVLLTVQLAAVLLLVTLWRA), serve as a signal peptide directing secretion. N-linked (GlcNAc...) asparagine glycosylation is found at N364, N373, and N383. C455 contributes to the heme binding site.

It belongs to the cytochrome P450 family. It depends on heme as a cofactor.

The protein operates within alkaloid biosynthesis. Cytochrome P450 monooxygenase; part of the gene cluster that mediates the biosynthesis of the mycotoxins roquefortine C and meleagrin. The first stage is catalyzed by the dipeptide synthase roqA which condenses histidine and tryptophan to produce histidyltryptophanyldiketopiperazine (HTD). HTD is then converted to roquefortine C through two possible pathways. In the first pathway, prenyltransferase roqD transforms HTD to the intermediate roquefortine D, which is in turn converted to roquefortine C by the cytochrome P450 monooxygenase roqR. In the second pathway, HTD is first converted to the intermediate dehydrohistidyltryptophanyldi-ketopiperazine (DHTD) by roqR which is then prenylated by roqD to form roquefortine C. Roquefortine C can be further transformed to meleagrin via three more reactions including oxydation to glandicolin A by roqM, which is further reduced to glandicoline B by roqO. Finally, glandicoline B is converted to meleagrin by the glandicoline B O-methyltransferase roqN. More studies identified further branching and additional metabolites produced by the roquefortine/meleagrin cluster, including roquefortine F, roquefortine L, roquefortine M, roquefortine N and neoxaline. In Penicillium rubens (strain ATCC 28089 / DSM 1075 / NRRL 1951 / Wisconsin 54-1255) (Penicillium chrysogenum), this protein is Cytochrome P450 monooxygenase roqR.